We begin with the raw amino-acid sequence, 451 residues long: Chromosomal replication initiator protein DnaA (451 aa).

Positions 1-72 are domain I, interacts with DnaA modulators; that stretch reads MQSIEDIWQE…ANILQEITGR (72 aa). Positions 72–108 are domain II; it reads RLFDVRFIDGEQEENFEYTVIKPNPALDEDGIEIGKH. Residues 109 to 325 form a domain III, AAA+ region region; sequence MLNPRYVFDT…GALIRVVAYS (217 aa). Residues G153, G155, K156, and T157 each coordinate ATP. Residues 326-451 are domain IV, binds dsDNA; sequence SLVNKDITAG…KNLRKSQNMF (126 aa).

The protein belongs to the DnaA family. As to quaternary structure, oligomerizes as a right-handed, spiral filament on DNA at oriC.

Its subcellular location is the cytoplasm. Plays an essential role in the initiation and regulation of chromosomal replication. ATP-DnaA binds to the origin of replication (oriC) to initiate formation of the DNA replication initiation complex once per cell cycle. Binds the DnaA box (a 9 base pair repeat at the origin) and separates the double-stranded (ds)DNA. Forms a right-handed helical filament on oriC DNA; dsDNA binds to the exterior of the filament while single-stranded (ss)DNA is stabiized in the filament's interior. The ATP-DnaA-oriC complex binds and stabilizes one strand of the AT-rich DNA unwinding element (DUE), permitting loading of DNA polymerase. After initiation quickly degrades to an ADP-DnaA complex that is not apt for DNA replication. Binds acidic phospholipids. This is Chromosomal replication initiator protein DnaA from Listeria welshimeri serovar 6b (strain ATCC 35897 / DSM 20650 / CCUG 15529 / CIP 8149 / NCTC 11857 / SLCC 5334 / V8).